A 427-amino-acid chain; its full sequence is Piwi protein (427 aa).

The mid domain stretch occupies residues P38–K167. The Piwi domain maps to G110–R406. A binds 5'-phosphorylated end of guide DNA region spans residues Y118–Y124. Positions R147–N148 are binds target DNA. The interval T150–N155 is binds guide DNA. A divalent metal cation contacts are provided by Q159 and L427. The tract at residues P168–L427 is PIWI domain.

Belongs to the argonaute family. Short pAgo subfamily. As to quaternary structure, homodimer probably stabilized by DNA. Each subunit is capable of interacting with a DNA molecule. A divalent metal cation is required as a cofactor.

Its function is as follows. Might play a role in defense against invading genetic elements, using short nucleic acid sequences as guides to bind complementary target strands, resulting in slicing of the target nucleic acid. Binds nucleic acids with decreasing affinity in the following order; ssDNA, ssRNA, dsDNA, RNA-DNA, RNA-RNA. Association of the 5' seed region of the guide strand (nucleotides 2-7) with AfPiwi increases affinity for the corresponding target strand; the greatest increase in affinity is for guide DNA with target RNA. The sequence is that of Piwi protein from Archaeoglobus fulgidus (strain ATCC 49558 / DSM 4304 / JCM 9628 / NBRC 100126 / VC-16).